Here is a 534-residue protein sequence, read N- to C-terminus: NAD(P)H-quinone oxidoreductase chain 4 (534 aa).

Transmembrane regions (helical) follow at residues 6-26 (FPWL…LPFI), 38-58 (WYAL…FYTQ), 91-111 (MPLI…SWPV), 117-137 (LFYF…AVQD), 138-158 (LLVF…LLSI), 171-191 (FILY…AMAF), 214-234 (LLCY…VPLH), 245-265 (TAPV…YALI), 279-299 (FAPA…LTSF), 316-336 (MGFV…GAVL), 337-357 (QMVS…ATYD), 377-399 (IFAM…GFVA), 419-439 (VPVV…LLSM), and 466-486 (IFVI…PKII).

It belongs to the complex I subunit 4 family.

The protein localises to the cellular thylakoid membrane. The enzyme catalyses a plastoquinone + NADH + (n+1) H(+)(in) = a plastoquinol + NAD(+) + n H(+)(out). It catalyses the reaction a plastoquinone + NADPH + (n+1) H(+)(in) = a plastoquinol + NADP(+) + n H(+)(out). In terms of biological role, NDH-1 shuttles electrons from NAD(P)H, via FMN and iron-sulfur (Fe-S) centers, to quinones in the respiratory chain. The immediate electron acceptor for the enzyme in this species is believed to be plastoquinone. Couples the redox reaction to proton translocation (for every two electrons transferred, four hydrogen ions are translocated across the cytoplasmic membrane), and thus conserves the redox energy in a proton gradient. In Acaryochloris marina (strain MBIC 11017), this protein is NAD(P)H-quinone oxidoreductase chain 4.